The primary structure comprises 154 residues: Small ribosomal subunit protein uS15 (154 aa).

The segment at methionine 1 to tryptophan 23 is disordered.

This sequence belongs to the universal ribosomal protein uS15 family. Part of the 30S ribosomal subunit.

The sequence is that of Small ribosomal subunit protein uS15 from Staphylothermus marinus (strain ATCC 43588 / DSM 3639 / JCM 9404 / F1).